A 30-amino-acid chain; its full sequence is uncharacterized protein (30 aa).

This is an uncharacterized protein from Saccharomyces cerevisiae (strain ATCC 204508 / S288c) (Baker's yeast).